The sequence spans 569 residues: Arginine--tRNA ligase (569 aa).

Residues 123-133 (PNIAKRMHIGH) carry the 'HIGH' region motif.

It belongs to the class-I aminoacyl-tRNA synthetase family. As to quaternary structure, monomer.

The protein resides in the cytoplasm. It carries out the reaction tRNA(Arg) + L-arginine + ATP = L-arginyl-tRNA(Arg) + AMP + diphosphate. This Fusobacterium nucleatum subsp. nucleatum (strain ATCC 25586 / DSM 15643 / BCRC 10681 / CIP 101130 / JCM 8532 / KCTC 2640 / LMG 13131 / VPI 4355) protein is Arginine--tRNA ligase.